The sequence spans 430 residues: Probable GPI-anchored adhesin-like protein PGA32 (430 aa).

The N-terminal stretch at 1–16 (MKVSTLIIVSIPIVSG) is a signal peptide. Disordered stretches follow at residues 88-195 (LGQV…TVIN), 232-257 (IASA…RGIK), 278-302 (GGNG…SKYF), and 314-336 (SKSI…SSTD). 2 stretches are compositionally biased toward low complexity: residues 92 to 112 (TTPS…PTTS) and 122 to 135 (TDTA…TNAR). A compositionally biased stretch (polar residues) spans 141 to 167 (TPVTVSGDNVLTLFGNPNLSTGNDQSN). Composition is skewed to low complexity over residues 168–187 (SVSK…SSSS) and 233–253 (ASAS…SSSA). Residues 289–302 (YKNHSTTSTTSKYF) show a composition bias toward polar residues. Positions 314–335 (SKSIYSNSTTSRSSLSVSSSST) are enriched in low complexity. A lipid anchor (GPI-anchor amidated glycine) is attached at glycine 401. A propeptide spans 402 to 430 (DGNKLIGGNKYLISFMWTNLILTMIMLFT) (removed in mature form).

It localises to the cell membrane. Functionally, putative adhesin which is involved in cell adhesion and virulence. This chain is Probable GPI-anchored adhesin-like protein PGA32 (PGA32), found in Candida albicans (strain SC5314 / ATCC MYA-2876) (Yeast).